The sequence spans 223 residues: UPF0758 protein FMG_0357 (223 aa).

Residues 101–223 enclose the MPN domain; sequence SLNDPDSVAE…SLSMRKGMYF (123 aa). Positions 172, 174, and 185 each coordinate Zn(2+). The short motif at 172-185 is the JAMM motif element; it reads HNHPSGSLIPSNAD.

This sequence belongs to the UPF0758 family.

The sequence is that of UPF0758 protein FMG_0357 from Finegoldia magna (strain ATCC 29328 / DSM 20472 / WAL 2508) (Peptostreptococcus magnus).